Reading from the N-terminus, the 79-residue chain is Exodeoxyribonuclease 7 small subunit (79 aa).

The protein belongs to the XseB family. In terms of assembly, heterooligomer composed of large and small subunits.

Its subcellular location is the cytoplasm. The catalysed reaction is Exonucleolytic cleavage in either 5'- to 3'- or 3'- to 5'-direction to yield nucleoside 5'-phosphates.. In terms of biological role, bidirectionally degrades single-stranded DNA into large acid-insoluble oligonucleotides, which are then degraded further into small acid-soluble oligonucleotides. This is Exodeoxyribonuclease 7 small subunit from Lactococcus lactis subsp. cremoris (strain SK11).